Here is a 381-residue protein sequence, read N- to C-terminus: Chaperone protein DnaJ 1 (381 aa).

Residues 4–68 (DYYGLLGVSR…EKRRIVDLGG (65 aa)) enclose the J domain. The CR-type zinc-finger motif lies at 132–214 (GVTKQVTVDT…CMGDGRVRAR (83 aa)). Positions 145, 148, 162, 165, 188, 191, 202, and 205 each coordinate Zn(2+). CXXCXGXG motif repeat units follow at residues 145–152 (CDRCHGKG), 162–169 (CDTCGGRG), 188–195 (CPTCRGVG), and 202–209 (CHQCMGDG).

The protein belongs to the DnaJ family. As to quaternary structure, homodimer. Requires Zn(2+) as cofactor.

The protein resides in the cytoplasm. Its function is as follows. Participates actively in the response to hyperosmotic and heat shock by preventing the aggregation of stress-denatured proteins and by disaggregating proteins, also in an autonomous, DnaK-independent fashion. Unfolded proteins bind initially to DnaJ; upon interaction with the DnaJ-bound protein, DnaK hydrolyzes its bound ATP, resulting in the formation of a stable complex. GrpE releases ADP from DnaK; ATP binding to DnaK triggers the release of the substrate protein, thus completing the reaction cycle. Several rounds of ATP-dependent interactions between DnaJ, DnaK and GrpE are required for fully efficient folding. Also involved, together with DnaK and GrpE, in the DNA replication of plasmids through activation of initiation proteins. The sequence is that of Chaperone protein DnaJ 1 from Mycolicibacterium paratuberculosis (strain ATCC BAA-968 / K-10) (Mycobacterium paratuberculosis).